A 373-amino-acid polypeptide reads, in one-letter code: Dual-specificity RNA methyltransferase RlmN (373 aa).

E94 (proton acceptor) is an active-site residue. A Radical SAM core domain is found at E100–D339. An intrachain disulfide couples C107 to C344. Positions 114, 118, and 121 each coordinate [4Fe-4S] cluster. S-adenosyl-L-methionine is bound by residues G168–E169, S200, S222–H224, and N301. C344 functions as the S-methylcysteine intermediate in the catalytic mechanism.

Belongs to the radical SAM superfamily. RlmN family. [4Fe-4S] cluster is required as a cofactor.

It localises to the cytoplasm. It carries out the reaction adenosine(2503) in 23S rRNA + 2 reduced [2Fe-2S]-[ferredoxin] + 2 S-adenosyl-L-methionine = 2-methyladenosine(2503) in 23S rRNA + 5'-deoxyadenosine + L-methionine + 2 oxidized [2Fe-2S]-[ferredoxin] + S-adenosyl-L-homocysteine. It catalyses the reaction adenosine(37) in tRNA + 2 reduced [2Fe-2S]-[ferredoxin] + 2 S-adenosyl-L-methionine = 2-methyladenosine(37) in tRNA + 5'-deoxyadenosine + L-methionine + 2 oxidized [2Fe-2S]-[ferredoxin] + S-adenosyl-L-homocysteine. Specifically methylates position 2 of adenine 2503 in 23S rRNA and position 2 of adenine 37 in tRNAs. m2A2503 modification seems to play a crucial role in the proofreading step occurring at the peptidyl transferase center and thus would serve to optimize ribosomal fidelity. The sequence is that of Dual-specificity RNA methyltransferase RlmN from Shewanella pealeana (strain ATCC 700345 / ANG-SQ1).